A 100-amino-acid polypeptide reads, in one-letter code: Regulatory protein NosR (100 aa).

It localises to the cell membrane. Functionally, transcriptional activator of the nitrous-oxide reductase gene NosZ. This Pseudomonas aeruginosa protein is Regulatory protein NosR (nosR).